The following is a 282-amino-acid chain: Nucleotide-binding protein Fnod_1159 (282 aa).

ATP is bound at residue 9-16 (GHSGAGKS). Position 57 to 60 (57 to 60 (DIRS)) interacts with GTP.

It belongs to the RapZ-like family.

In terms of biological role, displays ATPase and GTPase activities. The sequence is that of Nucleotide-binding protein Fnod_1159 from Fervidobacterium nodosum (strain ATCC 35602 / DSM 5306 / Rt17-B1).